A 362-amino-acid chain; its full sequence is Protein OCA4 (362 aa).

In terms of biological role, required for replication of Brome mosaic virus (BMV). This Saccharomyces cerevisiae (strain ATCC 204508 / S288c) (Baker's yeast) protein is Protein OCA4 (OCA4).